The chain runs to 196 residues: ATP-dependent Clp protease proteolytic subunit (196 aa).

Residue Ser101 is the Nucleophile of the active site. His126 is an active-site residue.

This sequence belongs to the peptidase S14 family. Component of the chloroplastic Clp protease core complex.

The protein localises to the plastid. It is found in the chloroplast stroma. The catalysed reaction is Hydrolysis of proteins to small peptides in the presence of ATP and magnesium. alpha-casein is the usual test substrate. In the absence of ATP, only oligopeptides shorter than five residues are hydrolyzed (such as succinyl-Leu-Tyr-|-NHMec, and Leu-Tyr-Leu-|-Tyr-Trp, in which cleavage of the -Tyr-|-Leu- and -Tyr-|-Trp bonds also occurs).. Its function is as follows. Cleaves peptides in various proteins in a process that requires ATP hydrolysis. Has a chymotrypsin-like activity. Plays a major role in the degradation of misfolded proteins. The protein is ATP-dependent Clp protease proteolytic subunit of Atropa belladonna (Belladonna).